Here is a 251-residue protein sequence, read N- to C-terminus: Protein phosphatase 1 regulatory subunit 35 (251 aa).

2 disordered regions span residues 58–99 (LITV…QQTH) and 180–235 (PALA…VPRP). The span at 76-99 (PNKDEHGVETDREQSRECDGQQTH) shows a compositional bias: basic and acidic residues.

It belongs to the PPP1R35 family.

It localises to the cytoplasm. The protein resides in the cytoskeleton. Its subcellular location is the microtubule organizing center. The protein localises to the centrosome. It is found in the centriole. During centriole duplication, may play a role in the centriole elongation by promoting the recruitment of the microtubule-binding elongation machinery, leading to the centriole to centrosome conversion. In addition may play a role in the primary cilia assembly. The sequence is that of Protein phosphatase 1 regulatory subunit 35 from Danio rerio (Zebrafish).